Here is a 401-residue protein sequence, read N- to C-terminus: Aspartate aminotransferase, mitochondrial (401 aa).

The residue at position 19 (Thr19) is a Phosphothreonine. Residue Lys30 is modified to N6-acetyllysine. Gly36 is a binding site for substrate. N6-acetyllysine; alternate is present on Lys44. Position 44 is an N6-succinyllysine; alternate (Lys44). Lys53 carries the N6-acetyllysine modification. Lys61 carries the post-translational modification N6-acetyllysine; alternate. At Lys61 the chain carries N6-succinyllysine; alternate. Tyr67 carries the post-translational modification 3'-nitrotyrosine; alternate. A Phosphotyrosine; alternate modification is found at Tyr67. N6-acetyllysine; alternate is present on residues Lys78, Lys93, and Lys130. 3 positions are modified to N6-succinyllysine; alternate: Lys78, Lys93, and Lys130. Trp133 provides a ligand contact to substrate. At Lys156 the chain carries N6-acetyllysine; alternate. The residue at position 156 (Lys156) is an N6-succinyllysine; alternate. A substrate-binding site is contributed by Asn186. At Lys198 the chain carries N6-succinyllysine. The residue at position 205 (Lys205) is an N6-acetyllysine. N6-acetyllysine; alternate occurs at positions 250 and 267. Position 250 is an N6-(pyridoxal phosphate)lysine; alternate (Lys250). An N6-succinyllysine; alternate modification is found at Lys267. N6-acetyllysine is present on Lys273. N6-acetyllysine; alternate is present on Lys280. Position 280 is an N6-succinyllysine; alternate (Lys280). Position 284 is an asymmetric dimethylarginine (Arg284). Position 309 is an N6-acetyllysine; alternate (Lys309). Lys309 carries the N6-succinyllysine; alternate modification. An N6-acetyllysine modification is found at Lys316. At Lys334 the chain carries N6-acetyllysine; alternate. Position 334 is an N6-succinyllysine; alternate (Lys334). N6-acetyllysine is present on residues Lys335 and Lys358. An N6-acetyllysine; alternate mark is found at Lys367 and Lys375. An N6-succinyllysine; alternate mark is found at Lys367 and Lys375. Substrate is bound at residue Arg378.

Belongs to the class-I pyridoxal-phosphate-dependent aminotransferase family. As to quaternary structure, homodimer. Requires pyridoxal 5'-phosphate as cofactor.

It localises to the mitochondrion matrix. It is found in the cell membrane. It carries out the reaction L-aspartate + 2-oxoglutarate = oxaloacetate + L-glutamate. The enzyme catalyses L-kynurenine + 2-oxoglutarate = kynurenate + L-glutamate + H2O. Functionally, catalyzes the irreversible transamination of the L-tryptophan metabolite L-kynurenine to form kynurenic acid (KA). As a member of the malate-aspartate shuttle, it has a key role in the intracellular NAD(H) redox balance. Is important for metabolite exchange between mitochondria and cytosol, and for amino acid metabolism. Facilitates cellular uptake of long-chain free fatty acids. This Equus caballus (Horse) protein is Aspartate aminotransferase, mitochondrial (GOT2).